A 217-amino-acid chain; its full sequence is Pyrophosphatase PpaX (217 aa).

Asp11 (nucleophile) is an active-site residue.

The protein belongs to the HAD-like hydrolase superfamily. PpaX family. The cofactor is Mg(2+).

The catalysed reaction is diphosphate + H2O = 2 phosphate + H(+). Its function is as follows. Hydrolyzes pyrophosphate formed during P-Ser-HPr dephosphorylation by HPrK/P. Might play a role in controlling the intracellular pyrophosphate pool. The chain is Pyrophosphatase PpaX from Listeria monocytogenes serotype 4b (strain CLIP80459).